The primary structure comprises 149 residues: Large ribosomal subunit protein bL9 (149 aa).

This sequence belongs to the bacterial ribosomal protein bL9 family.

In terms of biological role, binds to the 23S rRNA. This is Large ribosomal subunit protein bL9 from Leptospira borgpetersenii serovar Hardjo-bovis (strain JB197).